The chain runs to 1164 residues: IgA FC receptor (1164 aa).

Residues 1-37 form the signal peptide; that stretch reads MFKSNYERKMRYSIRKFSVGVASVAVASLFMGSVAHA. 2 disordered regions span residues 54 to 75 and 167 to 220; these read KPYPSMAQTDQGNNSSSSELET and HEEV…EDKD. Positions 59-73 are enriched in polar residues; sequence MAQTDQGNNSSSSEL. Basic and acidic residues-rich tracts occupy residues 167 to 176 and 183 to 220; these read HEEVEKDKKA and KQSDTKVDLSNIDKELNHQKSQVEKMAEQKGITNEDKD. IgA-binding regions lie at residues 199 to 438 and 439 to 826; these read NHQK…KIEL and TVSP…ETNT. The region spanning 434–534 is the Ig-like domain; that stretch reads QKIELTVSPE…VEKTFTITVQ (101 aa). Over residues 536-564 the composition is skewed to basic and acidic residues; sequence KEEKQVPKTPEQKDSKTEEKVPQEPKSND. Disordered stretches follow at residues 536-567 and 823-947; these read KEEKQVPKTPEQKDSKTEEKVPQEPKSNDKNQ and ETNT…PDGL. The segment covering 911–920 has biased composition (pro residues); that stretch reads PKIPEPPKTP. Positions 1132 to 1136 match the LPXTG sorting signal motif; sequence LPYTG. Threonine 1135 is modified (pentaglycyl murein peptidoglycan amidated threonine). Residues 1136–1164 constitute a propeptide, removed by sortase; the sequence is GVASNLVLEIMGLLGLIGTSFIAMKRRKS.

It localises to the secreted. The protein resides in the cell wall. In Streptococcus agalactiae, this protein is IgA FC receptor (bag).